The chain runs to 99 residues: MEEKNGWNIYMVTMKNGNIYTGISNNVLKRFDTHCNGKGAKCLRGKGPLKLSWFSKANYSHGEAASLEYTIKKQTKKVKLQIIKLNVLDVKTFLNGKMK.

In terms of domain architecture, GIY-YIG spans 5-81 (NGWNIYMVTM…KKQTKKVKLQ (77 aa)).

This Invertebrate iridescent virus 6 (IIV-6) protein is Putative GIY-YIG domain-containing protein 242L.